A 192-amino-acid polypeptide reads, in one-letter code: Fe/S biogenesis protein NfuA (192 aa).

2 residues coordinate [4Fe-4S] cluster: C149 and C152.

Belongs to the NfuA family. As to quaternary structure, homodimer. [4Fe-4S] cluster is required as a cofactor.

Its function is as follows. Involved in iron-sulfur cluster biogenesis. Binds a 4Fe-4S cluster, can transfer this cluster to apoproteins, and thereby intervenes in the maturation of Fe/S proteins. Could also act as a scaffold/chaperone for damaged Fe/S proteins. This is Fe/S biogenesis protein NfuA from Shewanella amazonensis (strain ATCC BAA-1098 / SB2B).